We begin with the raw amino-acid sequence, 821 residues long: Xylosyltransferase 1 (821 aa).

Residues Tyr-1–Lys-121 are disordered. Over Tyr-1–Arg-821 the chain is Lumenal. Over residues Lys-9–Glu-25 the composition is skewed to basic and acidic residues. Over residues Val-27–Thr-36 the composition is skewed to polar residues. 2 stretches are compositionally biased toward basic and acidic residues: residues His-41–Gln-58 and Gly-76–Ala-87. N-linked (GlcNAc...) asparagine glycosylation occurs at Asn-90. 4 disulfide bridges follow: Cys-122–Cys-150, Cys-166–Cys-407, Cys-426–Cys-439, and Cys-428–Cys-437. Residues Val-198, Asp-226, and Thr-255–Trp-257 contribute to the UDP-alpha-D-xylose site. An N-linked (GlcNAc...) asparagine glycan is attached at Asn-286. A UDP-alpha-D-xylose-binding site is contributed by Asp-359–Trp-360. UDP-alpha-D-xylose is bound by residues Ser-440 and Arg-463–Lys-464. Disulfide bonds link Cys-540–Cys-789 and Cys-782–Cys-795. Asn-642 carries an N-linked (GlcNAc...) asparagine glycan. Residues Ser-801–Arg-821 form a disordered region.

This sequence belongs to the glycosyltransferase 14 family. XylT subfamily. In terms of assembly, monomer. It depends on a divalent metal cation as a cofactor. Contains 7 disulfide bonds. Post-translationally, N-glycosylated.

The protein localises to the golgi apparatus membrane. It catalyses the reaction UDP-alpha-D-xylose + L-seryl-[protein] = 3-O-(beta-D-xylosyl)-L-seryl-[protein] + UDP + H(+). The protein operates within glycan metabolism; chondroitin sulfate biosynthesis. It participates in glycan metabolism; heparan sulfate biosynthesis. Its function is as follows. Catalyzes the first step in the biosynthesis of chondroitin sulfate and dermatan sulfate proteoglycans, such as DCN. Transfers D-xylose from UDP-D-xylose to specific serine residues of the core protein. Required for normal maturation of chondrocytes during bone development, normal onset of ossification and normal embryonic and postnatal skeleton development, especially of the long bones. In Rattus norvegicus (Rat), this protein is Xylosyltransferase 1 (Xylt1).